The sequence spans 182 residues: Organic solute transporter subunit beta (182 aa).

The signal sequence occupies residues 1-20 (MSGLLKYLFGCFILCLLLQG). Over 21–64 (KTHMTSATISKPHETIDIEKQNMTGERNSTLAQQLSFPMEDPTN) the chain is Extracellular. N-linked (GlcNAc...) asparagine glycans are attached at residues Asn42 and Asn48. The chain crosses the membrane as a helical span at residues 65–85 (WNYAILALAFVVLFLAFLILA). Residues 86–182 (QNSRANRTRK…LYTDSKEDDV (97 aa)) are Cytoplasmic-facing.

It belongs to the OST-beta family. Interacts with slc51a. The Ost-alpha/Ost-beta complex is a heterodimer composed of alpha (slc51a) and beta (slc51b) subunit; may induce the transport of slc51a from the endoplasmic reticulum to the plasma membrane. Expressed in liver.

Its subcellular location is the cell membrane. Its function is as follows. Essential component of the Ost-alpha/Ost-beta complex, a heterodimer that acts as the intestinal basolateral transporter responsible for bile acid export from enterocytes into portal blood. Efficiently transports the major species of bile acids. May modulate slc51a glycosylation, membrane trafficking and stability activities. Able to transport taurocholate, estrone sulfate, digoxin, and prostaglandin E(2), but not p-aminohippurate or S-dinitrophenyl glutathione. The protein is Organic solute transporter subunit beta (slc51b) of Leucoraja erinaceus (Little skate).